The sequence spans 486 residues: Protein kinase C and casein kinase substrate in neurons protein 2 (486 aa).

In terms of domain architecture, F-BAR spans 11 to 282; it reads VEVSSDSFWE…SIKAADAVED (272 aa). Positions 25-274 form a coiled coil; that stretch reads KRTVKRIDDG…TIYRELEQSI (250 aa). Position 53 is an N6-acetyllysine (K53). Phosphoserine is present on S273. Phosphoserine; by PKC is present on S313. Positions 315 to 426 are disordered; that stretch reads REKKKAVDGV…NPFDEDTTSG (112 aa). The span at 327–362 shows a compositional bias: polar residues; sequence TGINQTGDQSGQNKPGSNLSVPSNPAQSTQLQSSYN. Positions 362–364 match the NPF1 motif; it reads NPF. S373 bears the Phosphoserine; by IKKB mark. The span at 384–396 shows a compositional bias: polar residues; sequence NVSSYEKTQTYPT. The residue at position 399 (S399) is a Phosphoserine. A compositionally biased stretch (polar residues) spans 404 to 416; it reads NNPFSSTDANGDS. The NPF2 signature appears at 405-407; that stretch reads NPF. Positions 417-419 match the NPF3 motif; the sequence is NPF. The SH3 domain occupies 426–486; that stretch reads GTEVRVRALY…YPANYVEAIQ (61 aa). S446 is subject to Phosphoserine.

Belongs to the PACSIN family. Homodimer. May form heterooligomers with other PACSINs. Interacts (via NPF motifs) with EHD1 (via EH domain). Interacts (via NPF motifs) with EHD2 (via EH domain); this interaction probably stabilizes the caveolae. Interacts with EHD3. Interacts (via the SH3 domain) with MICALL1. Interacts with RAC1. Interacts (via SH3 domain) with DNM1, SYN1, SYNJ1 and WASL. Interacts (via F-BAR domain) with CAV1; this interaction induces membrane tubulation. Interacts with TRPV4. Forms a complex with EHD4 and MICALL1; the complex controls CDH5 trafficking and coordinates angiogenesis. Post-translationally, phosphorylated by casein kinase 2 (CK2). Phosphorylation by PKC probably decreases the membrane binding and tubulation capacities of PACSIN2, thereby modulating the lifetime of caveolae. In terms of tissue distribution, widely expressed (at protein level).

It is found in the cytoplasm. The protein localises to the cytoskeleton. The protein resides in the cytoplasmic vesicle membrane. It localises to the cell projection. Its subcellular location is the ruffle membrane. It is found in the early endosome. The protein localises to the recycling endosome membrane. The protein resides in the cell membrane. It localises to the membrane. Its subcellular location is the caveola. It is found in the cell junction. The protein localises to the adherens junction. Functionally, regulates the morphogenesis and endocytosis of caveolae. Lipid-binding protein that is able to promote the tubulation of the phosphatidic acid-containing membranes it preferentially binds. Plays a role in intracellular vesicle-mediated transport. Involved in the endocytosis of cell-surface receptors like the EGF receptor, contributing to its internalization in the absence of EGF stimulus. Essential for endothelial organization in sprouting angiogenesis, modulates CDH5-based junctions. Facilitates endothelial front-rear polarity during migration by recruiting EHD4 and MICALL1 to asymmetric adherens junctions between leader and follower cells. This chain is Protein kinase C and casein kinase substrate in neurons protein 2 (Pacsin2), found in Mus musculus (Mouse).